The primary structure comprises 258 residues: Isoprenyl transferase (258 aa).

Residue Asp24 is part of the active site. Asp24 is a Mg(2+) binding site. Residues 25–28 (GNGR), Trp29, Arg37, His41, and 69–71 (SSE) contribute to the substrate site. The active-site Proton acceptor is Asn72. Substrate-binding positions include Trp73, Arg75, Arg190, and 196 to 198 (RIS). Residue Glu209 coordinates Mg(2+).

The protein belongs to the UPP synthase family. In terms of assembly, homodimer. Requires Mg(2+) as cofactor.

Functionally, catalyzes the condensation of isopentenyl diphosphate (IPP) with allylic pyrophosphates generating different type of terpenoids. The sequence is that of Isoprenyl transferase from Ralstonia nicotianae (strain ATCC BAA-1114 / GMI1000) (Ralstonia solanacearum).